Here is a 366-residue protein sequence, read N- to C-terminus: UDP-GlcNAc:ribostamycin N-acetylglucosaminyltransferase (366 aa).

Over residues 342 to 352 the composition is skewed to low complexity; the sequence is AAGAGPAVPAG. A disordered region spans residues 342–366; the sequence is AAGAGPAVPAGAGEGRGGREEEHGG. Basic and acidic residues predominate over residues 357–366; sequence RGGREEEHGG.

The protein belongs to the glycosyltransferase group 1 family. Glycosyltransferase 4 subfamily. A divalent metal cation serves as cofactor.

It carries out the reaction ribostamycin + UDP-N-acetyl-alpha-D-glucosamine = 2'''-acetyl-6'''-hydroxyneomycin C + UDP + H(+). It functions in the pathway antibiotic biosynthesis; neomycin biosynthesis. Its function is as follows. Glycosyltransferase involved in the biosynthesis of neomycin by mediating glycosylation of ribostamycin with UDP-GlcNAc as a sugar donor to generate 2'''-acetyl-6'''-hydroxyneomycin C. This is UDP-GlcNAc:ribostamycin N-acetylglucosaminyltransferase (neoK) from Streptomyces fradiae (Streptomyces roseoflavus).